Consider the following 291-residue polypeptide: Bis(5'-nucleosyl)-tetraphosphatase, symmetrical (291 aa).

It belongs to the Ap4A hydrolase family.

It carries out the reaction P(1),P(4)-bis(5'-adenosyl) tetraphosphate + H2O = 2 ADP + 2 H(+). Functionally, hydrolyzes diadenosine 5',5'''-P1,P4-tetraphosphate to yield ADP. This chain is Bis(5'-nucleosyl)-tetraphosphatase, symmetrical, found in Coxiella burnetii (strain RSA 331 / Henzerling II).